A 105-amino-acid polypeptide reads, in one-letter code: Early nodulin-93 (105 aa).

A helical membrane pass occupies residues 66–83 (TAQALIISTATAAAYFIV).

It localises to the membrane. The sequence is that of Early nodulin-93 from Glycine max (Soybean).